Reading from the N-terminus, the 408-residue chain is D-galactonate dehydratase family member OG2516_05608 (408 aa).

Aspartate 215 is a binding site for Mg(2+). Histidine 217 is a D-arabinonate binding site. Glutamate 241 and glutamate 267 together coordinate Mg(2+). Residues glutamate 267, arginine 288, histidine 317, and glutamate 344 each coordinate D-arabinonate.

It belongs to the mandelate racemase/muconate lactonizing enzyme family. GalD subfamily.

Functionally, has no detectable activity with D-mannonate and with a panel of 70 other acid sugars (in vitro), in spite of the conservation of the residues that are expected to be important for catalytic activity and cofactor binding. May have evolved a divergent function. The chain is D-galactonate dehydratase family member OG2516_05608 from Oceanicola granulosus (strain ATCC BAA-861 / DSM 15982 / KCTC 12143 / HTCC2516).